A 129-amino-acid polypeptide reads, in one-letter code: Glyoxalase domain-containing protein 5 homolog (129 aa).

Residues 5–128 (RLDHLVLTVS…DYNLIEISNY (124 aa)) form the VOC domain.

The protein belongs to the glyoxalase I family.

In Dictyostelium discoideum (Social amoeba), this protein is Glyoxalase domain-containing protein 5 homolog (glod5).